We begin with the raw amino-acid sequence, 322 residues long: Adenine deaminase (322 aa).

Residues H11, H13, and H189 each contribute to the Zn(2+) site. E192 acts as the Proton donor in catalysis. Residue D270 participates in Zn(2+) binding. D271 provides a ligand contact to substrate.

Belongs to the metallo-dependent hydrolases superfamily. Adenosine and AMP deaminases family. Adenine deaminase type 2 subfamily. The cofactor is Zn(2+).

It carries out the reaction adenine + H2O + H(+) = hypoxanthine + NH4(+). Its function is as follows. Catalyzes the hydrolytic deamination of adenine to hypoxanthine. Plays an important role in the purine salvage pathway and in nitrogen catabolism. The chain is Adenine deaminase from Rhizobium leguminosarum bv. trifolii (strain WSM2304).